A 290-amino-acid chain; its full sequence is Small ribosomal subunit biogenesis GTPase RsgA (290 aa).

Positions 62 to 219 (RTCLKRPAVA…VADTPGFSRL (158 aa)) constitute a CP-type G domain. Residues 111–114 (NKAD) and 161–169 (GPSGVGKSS) contribute to the GTP site. Residues Cys243, Cys248, His250, and Cys256 each coordinate Zn(2+).

It belongs to the TRAFAC class YlqF/YawG GTPase family. RsgA subfamily. As to quaternary structure, monomer. Associates with 30S ribosomal subunit, binds 16S rRNA. Zn(2+) is required as a cofactor.

It is found in the cytoplasm. One of several proteins that assist in the late maturation steps of the functional core of the 30S ribosomal subunit. Helps release RbfA from mature subunits. May play a role in the assembly of ribosomal proteins into the subunit. Circularly permuted GTPase that catalyzes slow GTP hydrolysis, GTPase activity is stimulated by the 30S ribosomal subunit. The chain is Small ribosomal subunit biogenesis GTPase RsgA from Moorella thermoacetica (strain ATCC 39073 / JCM 9320).